Consider the following 283-residue polypeptide: Elongation factor Ts (283 aa).

The tract at residues 84-87 is involved in Mg(2+) ion dislocation from EF-Tu; sequence TDFV.

It belongs to the EF-Ts family.

It localises to the cytoplasm. In terms of biological role, associates with the EF-Tu.GDP complex and induces the exchange of GDP to GTP. It remains bound to the aminoacyl-tRNA.EF-Tu.GTP complex up to the GTP hydrolysis stage on the ribosome. The protein is Elongation factor Ts of Bifidobacterium longum (strain DJO10A).